A 307-amino-acid chain; its full sequence is Oxygen-dependent coproporphyrinogen-III oxidase (307 aa).

Residue Ser-99 participates in substrate binding. Residues His-103 and His-113 each coordinate a divalent metal cation. Catalysis depends on His-113, which acts as the Proton donor. Position 115–117 (115–117 (NVR)) interacts with substrate. Positions 152 and 182 each coordinate a divalent metal cation. An important for dimerization region spans residues 247-282 (YVEFNLVFDRGTLFGLQSGGRTESILMSMPPVANWR). Position 265-267 (265-267 (GGR)) interacts with substrate.

It belongs to the aerobic coproporphyrinogen-III oxidase family. In terms of assembly, homodimer. Requires a divalent metal cation as cofactor.

It localises to the cytoplasm. It carries out the reaction coproporphyrinogen III + O2 + 2 H(+) = protoporphyrinogen IX + 2 CO2 + 2 H2O. It functions in the pathway porphyrin-containing compound metabolism; protoporphyrin-IX biosynthesis; protoporphyrinogen-IX from coproporphyrinogen-III (O2 route): step 1/1. Its function is as follows. Involved in the heme biosynthesis. Catalyzes the aerobic oxidative decarboxylation of propionate groups of rings A and B of coproporphyrinogen-III to yield the vinyl groups in protoporphyrinogen-IX. This is Oxygen-dependent coproporphyrinogen-III oxidase from Burkholderia lata (strain ATCC 17760 / DSM 23089 / LMG 22485 / NCIMB 9086 / R18194 / 383).